The sequence spans 676 residues: Kojibiose hydrolase (676 aa).

Positions 1–20 (MNKGIIQLLALSLFCISVKA) are cleaved as a signal peptide. Glu469 (proton donor) is an active-site residue. Residue Glu613 is the Proton acceptor of the active site.

This sequence belongs to the glycosyl hydrolase 65 family.

It catalyses the reaction kojibiose + H2O = beta-D-glucose + D-glucose. Functionally, glycosidase that specifically hydrolyzes kojibiose to beta-glucose and glucose. Besides its activity on kojibiose, is also able to act on alpha-1,2-oligoglucans with a higher degree of polymerization. Shows weak activity on nigerose, but is not capable of breaking down trehalose, maltose, isomaltose, sucrose, isomaltulose, turanose or melezitose. The sequence is that of Kojibiose hydrolase from Mucilaginibacter mallensis.